Consider the following 91-residue polypeptide: CLAVATA3/ESR (CLE)-related protein 27 (91 aa).

The signal sequence occupies residues 1-35 (MTHAREWRSSLTTTLLMVILLSYMLHLFCVYSRVG). A hydroxyproline mark is found at P83 and P86. O-linked (Ara...) hydroxyproline glycosylation is present at P86.

It belongs to the CLV3/ESR signal peptide family. In terms of processing, the O-glycosylation (arabinosylation) of the hydroxyproline Pro-86 enhances binding affinity of the CLE27p peptide for its receptor. Mostly expressed in apex, and, to a lower extent, in roots, leaves, flowers and siliques.

Its subcellular location is the secreted. The protein localises to the extracellular space. Extracellular signal peptide that regulates cell fate. Represses root apical meristem maintenance. The sequence is that of CLAVATA3/ESR (CLE)-related protein 27 from Arabidopsis thaliana (Mouse-ear cress).